Reading from the N-terminus, the 240-residue chain is Putative glycyl-radical enzyme activating enzyme MJ1227 (240 aa).

The 219-residue stretch at 14–232 folds into the Radical SAM core domain; that stretch reads IDYPKKASAV…KKYIDNVVIR (219 aa). C29, C33, and C36 together coordinate [4Fe-4S] cluster. Residues 35–37, G71, and 126–128 each bind S-adenosyl-L-methionine; these read YCH and FDK.

It belongs to the organic radical-activating enzymes family. [4Fe-4S] cluster is required as a cofactor.

The catalysed reaction is glycyl-[protein] + reduced [flavodoxin] + S-adenosyl-L-methionine = glycin-2-yl radical-[protein] + semiquinone [flavodoxin] + 5'-deoxyadenosine + L-methionine + H(+). The protein is Putative glycyl-radical enzyme activating enzyme MJ1227 of Methanocaldococcus jannaschii (strain ATCC 43067 / DSM 2661 / JAL-1 / JCM 10045 / NBRC 100440) (Methanococcus jannaschii).